Consider the following 428-residue polypeptide: Glutamate-1-semialdehyde 2,1-aminomutase (428 aa).

N6-(pyridoxal phosphate)lysine is present on lysine 267.

This sequence belongs to the class-III pyridoxal-phosphate-dependent aminotransferase family. HemL subfamily. Homodimer. Requires pyridoxal 5'-phosphate as cofactor.

The protein localises to the cytoplasm. It catalyses the reaction (S)-4-amino-5-oxopentanoate = 5-aminolevulinate. The protein operates within porphyrin-containing compound metabolism; protoporphyrin-IX biosynthesis; 5-aminolevulinate from L-glutamyl-tRNA(Glu): step 2/2. This Flavobacterium johnsoniae (strain ATCC 17061 / DSM 2064 / JCM 8514 / BCRC 14874 / CCUG 350202 / NBRC 14942 / NCIMB 11054 / UW101) (Cytophaga johnsonae) protein is Glutamate-1-semialdehyde 2,1-aminomutase.